The primary structure comprises 312 residues: Glutaminase (312 aa).

7 residues coordinate substrate: Ser-67, Asn-118, Glu-162, Asn-169, Tyr-193, Tyr-245, and Val-263.

This sequence belongs to the glutaminase family. Homotetramer.

The catalysed reaction is L-glutamine + H2O = L-glutamate + NH4(+). This Bordetella avium (strain 197N) protein is Glutaminase.